Consider the following 229-residue polypeptide: Ras-related protein Rab-33B (229 aa).

The GTP site is built by Asn-43, Val-44, Gly-45, Lys-46, Thr-47, Cys-48, Thr-62, and Thr-65. Thr-47 lines the Mg(2+) pocket. The short motif at 56 to 68 is the Switch 1 element; that stretch reads GRFPDRTEATIGV. Mg(2+) contacts are provided by Thr-65 and Asp-88. The short motif at 89 to 108 is the Switch 2 element; the sequence is TAGQERFRKSMVQHYYRNVH. Gly-91, Asn-148, Lys-149, Asp-151, Ala-179, and Lys-180 together coordinate GTP. Residues Cys-227 and Cys-229 are each lipidated (S-geranylgeranyl cysteine). The residue at position 229 (Cys-229) is a Cysteine methyl ester.

The protein belongs to the small GTPase superfamily. Rab family. In terms of assembly, interacts (GTP- and GDP-bound forms) with ATG16L1; the complex consists of a tetramer where two RAB33B molecules bind independently one molecule of the ATG16L1 homodimer; the interaction promotes ATG12-ATG5-ATG16L1 complex recruitment to phagophores. Interacts with ATG16L2; however interaction is approximately hundred times lower than for ATG16L1. Interacts with RIC1 (via C-terminus domain); the interaction is direct with a preference for RAB33B-GTP. Interacts with RGP1. Mg(2+) is required as a cofactor. In terms of processing, prenylated.

Its subcellular location is the golgi apparatus membrane. It localises to the golgi apparatus. The protein resides in the cis-Golgi network. The protein localises to the preautophagosomal structure membrane. The enzyme catalyses GTP + H2O = GDP + phosphate + H(+). Regulated by guanine nucleotide exchange factors (GEFs) which promote the exchange of bound GDP for free GTP. Regulated by GTPase activating proteins (GAPs) such as SGSM2 which increase the GTP hydrolysis activity. Inhibited by GDP dissociation inhibitors (GDIs). The small GTPases Rab are key regulators of intracellular membrane trafficking, from the formation of transport vesicles to their fusion with membranes. Rabs cycle between an inactive GDP-bound form and an active GTP-bound form that is able to recruit to membranes different sets of downstream effectors directly responsible for vesicle formation, movement, tethering and fusion. RAB33B acts, in coordination with RAB6A, to regulate intra-Golgi retrograde trafficking. Participates in autophagosome formation by recruiting the ATG12-ATG5-ATG16L1 complex to phagophores, probably in a nucleotide-independent manner. This Homo sapiens (Human) protein is Ras-related protein Rab-33B.